Reading from the N-terminus, the 372-residue chain is GTPase Obg (372 aa).

The Obg domain maps to 1 to 159; it reads MKFIDEARIE…RMLKLELKVL (159 aa). Positions 128 to 147 are disordered; the sequence is LHFKSSTNRAPRQKTDGKPG. The OBG-type G domain occupies 160–334; that stretch reads ADVGLLGMPN…LVYAIHDYLV (175 aa). GTP contacts are provided by residues 166-173, 191-195, 213-216, 284-287, and 315-317; these read GMPNAGKS, FTTLA, DIPG, NKLD, and SAL. Positions 173 and 193 each coordinate Mg(2+).

Belongs to the TRAFAC class OBG-HflX-like GTPase superfamily. OBG GTPase family. As to quaternary structure, monomer. Mg(2+) serves as cofactor.

It is found in the cytoplasm. Functionally, an essential GTPase which binds GTP, GDP and possibly (p)ppGpp with moderate affinity, with high nucleotide exchange rates and a fairly low GTP hydrolysis rate. Plays a role in control of the cell cycle, stress response, ribosome biogenesis and in those bacteria that undergo differentiation, in morphogenesis control. The sequence is that of GTPase Obg from Burkholderia pseudomallei (strain 668).